Consider the following 570-residue polypeptide: MIPPEIRRSVLLQKAIKLALAGTLLTFASFSATAADPSSDTETPQPPDILLGALFNDVQNAKLFPDQKTFADAIPNSDPLMILADYRMQRNQSGFDLRHFVDVNFTLPKAGEKYVPPAGQSLREHIDGLWPVLTRSTKNVKKWDSLLPLPESYVVPGGRFREIYYWDSYFTMLGLAESGHWDKVADMVANFGYEIDAWGHIPNGNRTYYLSHSQPPFFAFMVELLAQHEGDDALKEYLPQLQKEYAYWMEGVETLQPGQQNQRVVKLEDGSVLNRYWDDRDTPRPESWVEDIATAKSNPNRPATEIYRDLRSAAASGWDFSSRWMDNPQQLSTIRTTTIVPVDLNALLYQLEKTLARASAAAGDRAKASQYDALANARQKAIEMHLWNNKEGWYADYDLQNNKIRDQLTAAALFPLYVNAAAKDRAAKVAAAAQAHLLQPGGLATTSVKSGQQWDAPNGWAPLQWVAAEGLQNYGQDDVAMEVTWRFLTNVQHTYDREKKLVEKYDVSSTGTGGGGGEYPLQDGFGWTNGVTLKMLDLICPQEKPCDSVPSTRPASLSATPTKTPSAATQ.

An N-terminal signal peptide occupies residues 1–34 (MIPPEIRRSVLLQKAIKLALAGTLLTFASFSATA). Substrate contacts are provided by residues R159, 166–167 (WD), N203, 212–214 (HSQ), 284–286 (RPE), and G317. Catalysis depends on proton donor/acceptor residues D319 and E503. A substrate-binding site is contributed by E518. Positions 544–570 (KPCDSVPSTRPASLSATPTKTPSAATQ) are disordered. The span at 554-570 (PASLSATPTKTPSAATQ) shows a compositional bias: low complexity.

It belongs to the glycosyl hydrolase 37 family. Monomer.

Its subcellular location is the periplasm. It carries out the reaction alpha,alpha-trehalose + H2O = alpha-D-glucose + beta-D-glucose. Its function is as follows. Provides the cells with the ability to utilize trehalose at high osmolarity by splitting it into glucose molecules that can subsequently be taken up by the phosphotransferase-mediated uptake system. This is Periplasmic trehalase from Salmonella paratyphi C (strain RKS4594).